A 450-amino-acid polypeptide reads, in one-letter code: Immunoglobulin G-binding protein A (450 aa).

The first 36 residues, 1-36 (MKKKNIYSIRKLGVGIASVTLGTLLISGGVTPAANA), serve as a signal peptide directing secretion. The short motif at 7–18 (YSIRKLGVGIAS) is the YSIRK-G/S signaling motif element. One copy of the Immunoglobulin-binding region E repeat lies at 37–92 (AQHDEAQQNAFYQVLNMPNLNADQRNGFIQSLKDDPSQSANVLGEAQKLNDSQAPK). One copy of the Immunoglobulin-binding region D repeat lies at 93 to 153 (ADAQQNNFNK…KKLNESQAPK (61 aa)). Residues 154-211 (ADNNFNKEQQNAFYEILNMPNLNEEQRNGFIQSLKDDPSQSANLLSEAKKLNESQAPK) form an Immunoglobulin-binding region A repeat. The stretch at 212–269 (ADNKFNKEQQNAFYEILHLPNLNEEQRNGFIQSLKDDPSVSKEILAEAKKLNDAQAPK) is one Immunoglobulin-binding region B/C repeat. The segment covering 260–354 (KKLNDAQAPK…GNKPGKEDGN (95 aa)) has biased composition (basic and acidic residues). Disordered stretches follow at residues 260–365 (KKLN…GDTV) and 401–421 (KKQP…ETGE). A run of 11 repeats spans residues 268 to 275 (PKEEDNKK), 276 to 283 (PGKEDGNK), 284 to 291 (PGKEDGNK), 292 to 299 (PGKEDNKK), 300 to 307 (PGKEDGNK), 308 to 315 (PGKEDNNK), 316 to 323 (PGKEDGNK), 324 to 331 (PGKEDNNK), 332 to 339 (PGKEDGNK), 340 to 347 (PGKEDGNK), and 348 to 355 (PGKEDGNG). The interval 268–355 (PKEEDNKKPG…NKPGKEDGNG (88 aa)) is 12 X 8 AA approximate tandem repeats. Residues 355-399 (GVHVVKPGDTVNDIAKANGTTADKIAADNKLADKNMIKPGQELVV) form the LysM domain. An LPXTG sorting signal motif is present at residues 416–420 (LPETG). Position 419 is a pentaglycyl murein peptidoglycan amidated threonine (Thr419). The propeptide at 420–450 (GEENPFIGTTVFGGLSLALGAALLAGRRREL) is removed by sortase.

This sequence belongs to the immunoglobulin-binding protein SpA family. Interacts with host TNFRSF1A; this interaction leads to the stimulation of both surface expression and shedding of TNFRSF1A.

Its subcellular location is the secreted. It is found in the cell wall. Plays a role in the inhibition of the host innate and adaptive immune responses. Possesses five immunoglobulin-binding domains that capture both the fragment crystallizable region (Fc region) and the Fab region (part of Ig that identifies antigen) of immunoglobulins. In turn, Staphylococcus aureus is protected from phagocytic killing via inhibition of Ig Fc region. In addition, the host elicited B-cell response is prevented due to a decrease of antibody-secreting cell proliferation that enter the bone marrow, thereby decreasing long-term antibody production. Inhibits osteogenesis by preventing osteoblast proliferation and expression of alkaline phosphatase, type I collagen, osteopontin and osteocalcin. Acts directly as a pro-inflammatory factor in the lung through its ability to bind and activate tumor necrosis factor alpha receptor 1/TNFRSF1A. In Staphylococcus aureus (strain Mu50 / ATCC 700699), this protein is Immunoglobulin G-binding protein A (spa).